The following is a 644-amino-acid chain: Replication protein E1 (644 aa).

A Nuclear localization signal motif is present at residues 86–88 (KRK). Residues 146-177 (QVESQNGDADLNDSESSGVGASSDVSSETDVD) form a disordered region. Residues 159-173 (SESSGVGASSDVSSE) are compositionally biased toward low complexity. The DNA-binding region stretch occupies residues 179–345 (CNTVPLQNIS…LTVLQHSFND (167 aa)). The 151-residue stretch at 444–594 (IEFTAFLVAF…FPFDANGNPV (151 aa)) folds into the SF3 helicase domain. 470–477 (GPANTGKS) is a binding site for ATP. Lysine 551 is covalently cross-linked (Glycyl lysine isopeptide (Lys-Gly) (interchain with G-Cter in SUMO)).

The protein belongs to the papillomaviridae E1 protein family. As to quaternary structure, can form hexamers. Interacts with E2 protein; this interaction increases E1 DNA binding specificity. Interacts with host DNA polymerase subunit POLA2. Interacts with host single stranded DNA-binding protein RPA1. Interacts with host TOP1; this interaction stimulates the enzymatic activity of TOP1. In terms of processing, phosphorylated. Sumoylated.

The protein localises to the host nucleus. The enzyme catalyses Couples ATP hydrolysis with the unwinding of duplex DNA by translocating in the 3'-5' direction.. It catalyses the reaction ATP + H2O = ADP + phosphate + H(+). Functionally, ATP-dependent DNA 3'-5' helicase required for initiation of viral DNA replication. It forms a complex with the viral E2 protein. The E1-E2 complex binds to the replication origin which contains binding sites for both proteins. During the initial step, a dimer of E1 interacts with a dimer of protein E2 leading to a complex that binds the viral origin of replication with high specificity. Then, a second dimer of E1 displaces the E2 dimer in an ATP-dependent manner to form the E1 tetramer. Following this, two E1 monomers are added to each half of the site, which results in the formation of two E1 trimers on the viral ori. Subsequently, two hexamers will be created. The double hexamer acts as a bi-directional helicase machinery and unwinds the viral DNA and then recruits the host DNA polymerase to start replication. In Homo sapiens (Human), this protein is Replication protein E1.